Here is a 355-residue protein sequence, read N- to C-terminus: Galactoside 2-alpha-L-fucosyltransferase (355 aa).

Residues 1 to 15 (MRNVKGLFSYMTKTK) are Cytoplasmic-facing. Residues 16–36 (SFYISIIVIIFIIFIVNRMGP) form a helical; Signal-anchor for type II membrane protein membrane-spanning segment. Over 37–355 (RNYNYKQIGT…MSRNGSIISK (319 aa)) the chain is Lumenal. 3 N-linked (GlcNAc...) asparagine glycosylation sites follow: Asn92, Asn311, and Asn349.

This sequence belongs to the glycosyltransferase 11 family. Expression is restricted to the 20 intestinal cells in larvae and adult.

The protein localises to the golgi apparatus. It localises to the golgi stack membrane. The protein operates within protein modification; protein glycosylation. Functionally, selectively catalyzes the addition of fucose in alpha 1-2 linkage to Gal-beta-(1-&gt;4)-Xyl-beta-R, Gal-beta-(1-&gt;6)-GlcNAc-R, Gal-beta-(1-&gt;3)-Gal-beta-(1-&gt;4)-Glc and Gal-beta-(1-&gt;3)-Gal-beta-(1-&gt;4)-Xyl-R acceptors but not Gal-beta-(1-&gt;3)-GlcNAc-beta-(1-&gt;3)-Gal-beta-(1-&gt;4)-Glc. Unlike in mammals, unable to fucosylate Gal-beta-(1-&gt;4)-Glc-beta-R. The chain is Galactoside 2-alpha-L-fucosyltransferase from Caenorhabditis elegans.